The primary structure comprises 216 residues: Elongation factor Ts (216 aa).

Residues 81 to 84 are involved in Mg(2+) ion dislocation from EF-Tu; the sequence is TDFV.

The protein belongs to the EF-Ts family.

It localises to the cytoplasm. Functionally, associates with the EF-Tu.GDP complex and induces the exchange of GDP to GTP. It remains bound to the aminoacyl-tRNA.EF-Tu.GTP complex up to the GTP hydrolysis stage on the ribosome. This is Elongation factor Ts from Geobacter metallireducens (strain ATCC 53774 / DSM 7210 / GS-15).